The chain runs to 89 residues: NADH-ubiquinone oxidoreductase chain 4L (89 aa).

The next 3 helical transmembrane spans lie at 1–21 (MNLTLILFLIGILGFVLNRKN), 22–42 (IILMLISIEIMLLAITFLILV), and 57–77 (IYIIVVAGAESAIGLGILVAF).

This sequence belongs to the complex I subunit 4L family.

It localises to the mitochondrion membrane. It catalyses the reaction a ubiquinone + NADH + 5 H(+)(in) = a ubiquinol + NAD(+) + 4 H(+)(out). Core subunit of the mitochondrial membrane respiratory chain NADH dehydrogenase (Complex I) that is believed to belong to the minimal assembly required for catalysis. Complex I functions in the transfer of electrons from NADH to the respiratory chain. The immediate electron acceptor for the enzyme is believed to be ubiquinone. The sequence is that of NADH-ubiquinone oxidoreductase chain 4L (ND4L) from Cryphonectria parasitica (Chestnut blight fungus).